The following is a 137-amino-acid chain: Universal stress protein in QAH/OAS sulfhydrylase 3'region (137 aa).

It belongs to the universal stress protein A family.

This is Universal stress protein in QAH/OAS sulfhydrylase 3'region from Thermus aquaticus.